The following is a 78-amino-acid chain: Putative membrane protein insertion efficiency factor (78 aa).

This sequence belongs to the UPF0161 family.

The protein localises to the cell inner membrane. In terms of biological role, could be involved in insertion of integral membrane proteins into the membrane. The protein is Putative membrane protein insertion efficiency factor of Prochlorococcus marinus (strain MIT 9301).